Consider the following 145-residue polypeptide: Large ribosomal subunit protein uL16 (145 aa).

Basic residues predominate over residues 1 to 17 (MLMPKRVKHRKVQRGRM). Residues 1-20 (MLMPKRVKHRKVQRGRMKGV) form a disordered region.

It belongs to the universal ribosomal protein uL16 family. As to quaternary structure, part of the 50S ribosomal subunit.

In terms of biological role, binds 23S rRNA and is also seen to make contacts with the A and possibly P site tRNAs. This Acetivibrio thermocellus (strain ATCC 27405 / DSM 1237 / JCM 9322 / NBRC 103400 / NCIMB 10682 / NRRL B-4536 / VPI 7372) (Clostridium thermocellum) protein is Large ribosomal subunit protein uL16.